The chain runs to 355 residues: 3-dehydroquinate synthase (355 aa).

NAD(+) contacts are provided by residues 71 to 76 (EGEERK), 105 to 109 (GVVGD), 129 to 130 (TS), Lys142, and Lys151. Zn(2+) contacts are provided by Glu184, His246, and His263.

The protein belongs to the sugar phosphate cyclases superfamily. Dehydroquinate synthase family. Requires Co(2+) as cofactor. The cofactor is Zn(2+). NAD(+) is required as a cofactor.

Its subcellular location is the cytoplasm. The enzyme catalyses 7-phospho-2-dehydro-3-deoxy-D-arabino-heptonate = 3-dehydroquinate + phosphate. It participates in metabolic intermediate biosynthesis; chorismate biosynthesis; chorismate from D-erythrose 4-phosphate and phosphoenolpyruvate: step 2/7. In terms of biological role, catalyzes the conversion of 3-deoxy-D-arabino-heptulosonate 7-phosphate (DAHP) to dehydroquinate (DHQ). The protein is 3-dehydroquinate synthase of Streptococcus pneumoniae serotype 19F (strain G54).